Reading from the N-terminus, the 154-residue chain is Putative F-box protein At2g11200 (154 aa).

One can recognise an F-box domain in the interval 5 to 51 (TTAMSDLPRDLEEEVLSRVQLASLRAVRTTCKKWNRRLSKYRFTKKY).

The sequence is that of Putative F-box protein At2g11200 from Arabidopsis thaliana (Mouse-ear cress).